The chain runs to 342 residues: Anthranilate phosphoribosyltransferase (342 aa).

5-phospho-alpha-D-ribose 1-diphosphate contacts are provided by residues Gly81, Gly84–Asp85, Asn91–Ser94, Lys109–Ser117, and Ser121. Gly81 contacts anthranilate. Ser93 lines the Mg(2+) pocket. Residue Asn112 participates in anthranilate binding. Arg167 contributes to the anthranilate binding site. The Mg(2+) site is built by Asp226 and Glu227.

This sequence belongs to the anthranilate phosphoribosyltransferase family. As to quaternary structure, homodimer. Requires Mg(2+) as cofactor.

It carries out the reaction N-(5-phospho-beta-D-ribosyl)anthranilate + diphosphate = 5-phospho-alpha-D-ribose 1-diphosphate + anthranilate. Its pathway is amino-acid biosynthesis; L-tryptophan biosynthesis; L-tryptophan from chorismate: step 2/5. Functionally, catalyzes the transfer of the phosphoribosyl group of 5-phosphorylribose-1-pyrophosphate (PRPP) to anthranilate to yield N-(5'-phosphoribosyl)-anthranilate (PRA). In Marinobacter nauticus (strain ATCC 700491 / DSM 11845 / VT8) (Marinobacter aquaeolei), this protein is Anthranilate phosphoribosyltransferase.